Reading from the N-terminus, the 419-residue chain is Potassium/proton antiporter CemA (419 aa).

The next 4 membrane-spanning stretches (helical) occupy residues 196 to 216, 297 to 317, 344 to 364, and 371 to 391; these read LASIQYGFFLLLLPWIVTLLF, IIELITDFIGIFTITVILCIA, ILLITDLCIGFHSPHGWEVLI, and FGFVPNQYITSFFVSTFPVVL.

This sequence belongs to the CemA family.

The protein resides in the plastid. It is found in the chloroplast inner membrane. It carries out the reaction K(+)(in) + H(+)(out) = K(+)(out) + H(+)(in). Contributes to K(+)/H(+) antiport activity by supporting proton efflux to control proton extrusion and homeostasis in chloroplasts in a light-dependent manner to modulate photosynthesis. Prevents excessive induction of non-photochemical quenching (NPQ) under continuous-light conditions. Indirectly promotes efficient inorganic carbon uptake into chloroplasts. This is Potassium/proton antiporter CemA from Chara vulgaris (Common stonewort).